The sequence spans 561 residues: Urocanate hydratase (561 aa).

Residues 52-53, Gln130, 176-178, Glu196, Arg201, 242-243, 263-267, 273-274, and Tyr322 each bind NAD(+); these read GG, GMG, NA, QTSAH, and YL. The active site involves Cys410. NAD(+) is bound at residue Gly492.

It belongs to the urocanase family. It depends on NAD(+) as a cofactor.

It is found in the cytoplasm. It catalyses the reaction 4-imidazolone-5-propanoate = trans-urocanate + H2O. Its pathway is amino-acid degradation; L-histidine degradation into L-glutamate; N-formimidoyl-L-glutamate from L-histidine: step 2/3. In terms of biological role, catalyzes the conversion of urocanate to 4-imidazolone-5-propionate. This chain is Urocanate hydratase, found in Salmonella agona (strain SL483).